A 470-amino-acid chain; its full sequence is Proline--tRNA ligase (470 aa).

This sequence belongs to the class-II aminoacyl-tRNA synthetase family. ProS type 3 subfamily. Homodimer.

The protein resides in the cytoplasm. It carries out the reaction tRNA(Pro) + L-proline + ATP = L-prolyl-tRNA(Pro) + AMP + diphosphate. In terms of biological role, catalyzes the attachment of proline to tRNA(Pro) in a two-step reaction: proline is first activated by ATP to form Pro-AMP and then transferred to the acceptor end of tRNA(Pro). This is Proline--tRNA ligase from Malacoplasma penetrans (strain HF-2) (Mycoplasma penetrans).